The following is a 63-amino-acid chain: Defensin-like protein 278 (63 aa).

The signal sequence occupies residues 1 to 15 (MSLVYMYMYIGVVMS). 3 disulfide bridges follow: Cys31–Cys48, Cys37–Cys53, and Cys41–Cys55.

This sequence belongs to the DEFL family.

The protein resides in the secreted. The protein is Defensin-like protein 278 of Arabidopsis thaliana (Mouse-ear cress).